We begin with the raw amino-acid sequence, 187 residues long: Putative type I specificity subunit S.MpnORF289P N-terminus (187 aa).

Belongs to the type-I restriction system S methylase family. In terms of assembly, the methyltransferase is composed of M and S polypeptides.

Functionally, the N-terminal section of a specificity (S) subunit of a type I methyltransferase (MTase); this subunit dictates DNA sequence specificity. The single R subunit has multiple frameshifts and is probably not expressed. This chain is Putative type I specificity subunit S.MpnORF289P N-terminus, found in Mycoplasma pneumoniae (strain ATCC 29342 / M129 / Subtype 1) (Mycoplasmoides pneumoniae).